The following is a 225-amino-acid chain: LexA repressor (225 aa).

Residues 26-46 constitute a DNA-binding region (H-T-H motif); sequence YEEMKDSLNLKSKSGIHRLIS. Active-site for autocatalytic cleavage activity residues include Ser-146 and Lys-184.

Belongs to the peptidase S24 family. In terms of assembly, homodimer.

It carries out the reaction Hydrolysis of Ala-|-Gly bond in repressor LexA.. Functionally, represses a number of genes involved in the response to DNA damage (SOS response), including recA and lexA. In the presence of single-stranded DNA, RecA interacts with LexA causing an autocatalytic cleavage which disrupts the DNA-binding part of LexA, leading to derepression of the SOS regulon and eventually DNA repair. The protein is LexA repressor of Pelagibacter ubique (strain HTCC1062).